A 209-amino-acid polypeptide reads, in one-letter code: Translation initiation factor 2 subunit beta (209 aa).

The region spanning 144-202 (TIEEGKEYVVEITEVGSSGEGRTNYKGYTIFVPGAKRGETVKVRIKKVKNDVAIGEIIE) is the TRAM domain.

The protein belongs to the eIF-2-beta/eIF-5 family. In terms of assembly, heterotrimer composed of an alpha, a beta and a gamma chain.

Functionally, eIF-2 functions in the early steps of protein synthesis by forming a ternary complex with GTP and initiator tRNA. The polypeptide is Translation initiation factor 2 subunit beta (eif2b) (Thermoplasma acidophilum (strain ATCC 25905 / DSM 1728 / JCM 9062 / NBRC 15155 / AMRC-C165)).